Consider the following 817-residue polypeptide: Lon protease (817 aa).

The Lon N-terminal domain occupies 22–216 (VPIMPLSDGV…KVTRQLNHQL (195 aa)). 368–375 (GPPGTGKT) lines the ATP pocket. One can recognise a Lon proteolytic domain in the interval 604 to 785 (ALTPGVVMGL…GDVLELALNG (182 aa)). Catalysis depends on residues S691 and K734. The segment at 784-817 (NGNGATKKKKKTPAKSKKSTKPAAKKTAARKSRK) is disordered. Residues 789-817 (TKKKKKTPAKSKKSTKPAAKKTAARKSRK) show a composition bias toward basic residues.

This sequence belongs to the peptidase S16 family. In terms of assembly, homohexamer. Organized in a ring with a central cavity.

It localises to the cytoplasm. It carries out the reaction Hydrolysis of proteins in presence of ATP.. Functionally, ATP-dependent serine protease that mediates the selective degradation of mutant and abnormal proteins as well as certain short-lived regulatory proteins. Required for cellular homeostasis and for survival from DNA damage and developmental changes induced by stress. Degrades polypeptides processively to yield small peptide fragments that are 5 to 10 amino acids long. Binds to DNA in a double-stranded, site-specific manner. This is Lon protease from Desulfosudis oleivorans (strain DSM 6200 / JCM 39069 / Hxd3) (Desulfococcus oleovorans).